The sequence spans 516 residues: Probable cyclic di-GMP phosphodiesterase PdeB (516 aa).

2 consecutive transmembrane segments (helical) span residues 6 to 26 and 242 to 262; these read LVGLISGVLILSVLLPVGLSI and QVFIWLPLGLVIGLLAAMFVL. In terms of domain architecture, EAL spans 268-516; that stretch reads IQSPHHRLQD…DFLRWAEQHL (249 aa).

It is found in the cell inner membrane. It catalyses the reaction 3',3'-c-di-GMP + H2O = 5'-phosphoguanylyl(3'-&gt;5')guanosine + H(+). Its function is as follows. Phosphodiesterase (PDE) that catalyzes the hydrolysis of cyclic-di-GMP (c-di-GMP) to 5'-pGpG. This Escherichia coli (strain K12) protein is Probable cyclic di-GMP phosphodiesterase PdeB.